The following is a 67-amino-acid chain: Guanine nucleotide-binding protein G(I)/G(S)/G(O) subunit gamma-13 (67 aa).

Cysteine methyl ester is present on Cys-64. Cys-64 carries S-farnesyl cysteine lipidation. The propeptide at 65-67 is removed in mature form; the sequence is TIL.

It belongs to the G protein gamma family. In terms of assembly, g proteins are composed of 3 units, alpha, beta and gamma.

It is found in the cell membrane. Functionally, guanine nucleotide-binding proteins (G proteins) are involved as a modulator or transducer in various transmembrane signaling systems. The beta and gamma chains are required for the GTPase activity, for replacement of GDP by GTP, and for G protein-effector interaction. In Mus musculus (Mouse), this protein is Guanine nucleotide-binding protein G(I)/G(S)/G(O) subunit gamma-13 (Gng13).